A 567-amino-acid chain; its full sequence is MFLDFIDQVTSILNDAVSSAGFEADDMELGPSQHADLSSRIAFRLASVAKQSPKDVAEKIAGEIVIPKGSFVEKVEALGPYLNIWAGRNFIEGTVLAIREQKEAFGGNFSEGRILLEHTSANPNGPLHVGHIRNSIIGDTLGRILKRAGYDVELHYYVNDMGRQIAIVSWALGYFEFDESSKPDHAIADVYIKANAELNAHPEKVAEIDKLMQLVEKGDAATIETFDKAVDLAVSGIKETLKKMNVAHDEFPKESSFIRSGDVSRIIEEIKATGRTEIDNGALVVNLQDYGFKKTLVIQRTDGTSLYTTRDLAYHEWKGERADRIIDVFGADHKLISGQLKATLNAIGKKEPEFVIFEFVSLPEGSMSTRSGKFISADDLLDQIKTQAYEEVDKRRPDMPDDFKATVAEIVGIGAVRYDIVKVSPEKSTVFDWKEALDFEKQGGPFIQYSHARACSILQKAKDEGLWSSEEPINTTLLVEDSEVSLIKKMAMFDNMLDQCAKELRPHTFAIYARELADAFNQFYRFVSVLNAEDEQLRSSRIALVDCARMVLANTLDTLGLGAPESM.

The short motif at 121–131 is the 'HIGH' region element; sequence ANPNGPLHVGH.

The protein belongs to the class-I aminoacyl-tRNA synthetase family.

The protein resides in the cytoplasm. It catalyses the reaction tRNA(Arg) + L-arginine + ATP = L-arginyl-tRNA(Arg) + AMP + diphosphate. The sequence is that of Arginine--tRNA ligase from Methanococcoides burtonii (strain DSM 6242 / NBRC 107633 / OCM 468 / ACE-M).